We begin with the raw amino-acid sequence, 289 residues long: Bidirectional sugar transporter SWEET15 (289 aa).

Topologically, residues 1-10 (MAMAMANHHT) are extracellular. A helical membrane pass occupies residues 11 to 31 (LGLIFGILGNIISFLVYFAPA). In terms of domain architecture, MtN3/slv 1 spans 14 to 100 (IFGILGNIIS…LYFFYAPMQA (87 aa)). Residues 32–45 (PTFYRIYKRKSAEG) lie on the Cytoplasmic side of the membrane. A helical transmembrane segment spans residues 46-66 (FHSLPYIVALFSAMLWLYYAL). The Extracellular portion of the chain corresponds to 67 to 70 (LKKD). A helical membrane pass occupies residues 71 to 91 (AFLLITINSFGCAIESFYILL). Residues 92 to 106 (YFFYAPMQAKKQTLK) are Cytoplasmic-facing. A helical transmembrane segment spans residues 107 to 127 (VVISLNVGVFSILVVLIQFLL). The Extracellular segment spans residues 128–134 (KGSNRIN). The helical transmembrane segment at 135-155 (VFGWICASFSVAVFAAPLSIV) threads the bilayer. The MtN3/slv 2 domain occupies 136–219 (FGWICASFSV…VLYGFYRNAG (84 aa)). The Cytoplasmic portion of the chain corresponds to 156 to 167 (AKVIRTKSVEFM). A helical transmembrane segment spans residues 168–188 (PFSLSFFLTLSAIMWFAYGLL). The Extracellular segment spans residues 189–193 (KNDPC). Residues 194–214 (VAIPNILGVILGLVQMVLYGF) form a helical membrane-spanning segment. Residues 215 to 289 (YRNAGKEKME…GELQPNGSTV (75 aa)) are Cytoplasmic-facing. The tract at residues 249–289 (GAQQNGIKKSGSEDVKDDEETGNREKSTENSGELQPNGSTV) is disordered. Residues 277-289 (ENSGELQPNGSTV) are compositionally biased toward polar residues.

It belongs to the SWEET sugar transporter family. As to quaternary structure, forms homooligomers and/or heterooligomers.

Its subcellular location is the cell membrane. Its function is as follows. Mediates both low-affinity uptake and efflux of sugar across the plasma membrane. This chain is Bidirectional sugar transporter SWEET15, found in Vitis vinifera (Grape).